The primary structure comprises 226 residues: Transmembrane protein 204 (226 aa).

The Cytoplasmic portion of the chain corresponds to 1 to 5; the sequence is MTVQR. The helical transmembrane segment at 6 to 26 threads the bilayer; the sequence is LVAAAVLVALVSLILNNVAAF. The Extracellular segment spans residues 27–103; it reads TSNWVCQTLE…LQFDMMRACN (77 aa). The helical transmembrane segment at 104 to 124 threads the bilayer; that stretch reads LVATAALTAGQLTFLLGLVGL. The Cytoplasmic portion of the chain corresponds to 125 to 136; the sequence is PLLSPDAPCWEE. The chain crosses the membrane as a helical span at residues 137 to 157; that stretch reads AMAAAFQLASFVLVIGLVTFY. Residues 158 to 170 are Extracellular-facing; sequence RIGPYTNLSWSCY. Asn164 is a glycosylation site (N-linked (GlcNAc...) asparagine). A helical membrane pass occupies residues 171–191; that stretch reads LNIGACLLATLAAAMLIWNIL. Topologically, residues 192 to 226 are cytoplasmic; sequence HKREDCMAPRVIVISRSLTARFRRGLDNDYVESPC.

In terms of tissue distribution, highly expressed in lung, heart, kidney and placenta. Lower expression in thymus, spleen, liver, testis and ovary. Expressed in endothelial and restricted epithelial cell populations.

The protein resides in the cell junction. Its subcellular location is the adherens junction. The protein localises to the cell membrane. Its function is as follows. Can influence paracellular permeability. Appears to be involved in cell-cell interactions through adherens. The sequence is that of Transmembrane protein 204 (TMEM204) from Homo sapiens (Human).